The sequence spans 568 residues: Nucleolar protein 58 (568 aa).

The Nop domain occupies 293–417 (IAPNLTALVG…LESRLRALEH (125 aa)). Positions 430–568 (ANGQQGRQQP…KKKKKKKKDE (139 aa)) are disordered. Residues 471-482 (EEVKEEKDEKKD) are compositionally biased toward basic and acidic residues. A compositionally biased stretch (basic residues) spans 522–533 (RKEAKKAAKAAK). Positions 534–544 (KAAEESGDGDK) are enriched in basic and acidic residues.

Belongs to the NOP5/NOP56 family.

It localises to the nucleus. The protein localises to the nucleolus. Required for pre-18S rRNA processing. May bind microtubules. The sequence is that of Nucleolar protein 58 (NOP58) from Cryptococcus neoformans var. neoformans serotype D (strain JEC21 / ATCC MYA-565) (Filobasidiella neoformans).